The following is a 178-amino-acid chain: Oligoribonuclease (178 aa).

One can recognise an Exonuclease domain in the interval 7 to 168 (LIWIDLEMTG…DDIRESIAEL (162 aa)). The active site involves tyrosine 128.

This sequence belongs to the oligoribonuclease family.

It is found in the cytoplasm. 3'-to-5' exoribonuclease specific for small oligoribonucleotides. In Francisella tularensis subsp. holarctica (strain FTNF002-00 / FTA), this protein is Oligoribonuclease.